The chain runs to 133 residues: MAQMMTLSLLSLVLALCIPWTQGSDGGGQDCCLKYSQKKIPYSIVRGYRKQEPSLGCPIPAILFLPRKHSKPELCANPEEGWVQNLMRRLDQPPAPGKQSPGCRKNRGTSKSGKKGKGSKGCKRTEQTQPSRG.

The signal sequence occupies residues 1 to 23 (MAQMMTLSLLSLVLALCIPWTQG). 3 cysteine pairs are disulfide-bonded: Cys-31–Cys-57, Cys-32–Cys-75, and Cys-103–Cys-122. Residues 87–133 (MRRLDQPPAPGKQSPGCRKNRGTSKSGKKGKGSKGCKRTEQTQPSRG) form a disordered region. The tract at residues 98 to 133 (KQSPGCRKNRGTSKSGKKGKGSKGCKRTEQTQPSRG) is C-terminal basic extension. The span at 104 to 122 (RKNRGTSKSGKKGKGSKGC) shows a compositional bias: basic residues.

This sequence belongs to the intercrine beta (chemokine CC) family. In terms of assembly, binds to CCR7 and to CXCR3. Interacts with PDPN; relocalizes PDPN to the basolateral membrane. Interacts with GPR174. As to expression, expressed strongly in lung, spleen, thymus, peripheral and mesentric lymph nodes. Also expressed in the testis, kidney, liver, and heart.

It localises to the secreted. In terms of biological role, inhibits hemopoiesis and stimulates chemotaxis. Chemotactic in vitro for thymocytes and activated T-cells, but not for B-cells, macrophages, or neutrophils. Potent mesangial cell chemoattractant. Shows preferential activity towards naive T-cells. May play a role in mediating homing of lymphocytes to secondary lymphoid organs. This chain is C-C motif chemokine 21b (Ccl21b), found in Mus musculus (Mouse).